A 1026-amino-acid polypeptide reads, in one-letter code: P3N-PIPO polyprotein (1026 aa).

One can recognise a Peptidase S30 domain in the interval 165–308; the sequence is RMSEASLQLF…KEQSNEIVHY (144 aa). Residues histidine 216, aspartate 225, and serine 259 each act as for P1 proteinase activity in the active site. The Involved in interaction with stylet and aphid transmission motif lies at 360-363; it reads KITC. Residues 618–620 carry the Involved in virions binding and aphid transmission motif; it reads PTK. In terms of domain architecture, Peptidase C6 spans 644–766; that stretch reads MFIAKAGYCY…DSSMKTYLVG (123 aa). Residues cysteine 652 and histidine 725 each act as for helper component proteinase activity in the active site.

It belongs to the potyviridae P3N-PIPO polyprotein family. As to quaternary structure, interacts (via PIPO domain) with host PCaP1 protein; this interaction may help to anchor the movement complex to the plasma membrane from which the complex could move to the plasmodesmata. Potyviral RNA is expressed as two polyproteins which undergo post-translational proteolytic processing. Genome polyprotein is processed by NIa-pro, P1 and HC-pro proteinases resulting in the production of at least ten individual proteins. P3N-PIPO is cleaved by P1 and HC-pro proteinases resulting in the production of three individual proteins. The P1 proteinase and the HC-pro cleave only their respective C-termini autocatalytically.

The protein resides in the host cell junction. It localises to the host plasmodesma. It carries out the reaction Hydrolyzes a Gly-|-Gly bond at its own C-terminus, commonly in the sequence -Tyr-Xaa-Val-Gly-|-Gly, in the processing of the potyviral polyprotein.. Its function is as follows. Required for aphid transmission and also has proteolytic activity. Only cleaves a Gly-Gly dipeptide at its own C-terminus. Interacts with virions and aphid stylets. Acts as a suppressor of RNA-mediated gene silencing, also known as post-transcriptional gene silencing (PTGS), a mechanism of plant viral defense that limits the accumulation of viral RNAs. May have RNA-binding activity. Allows efficient cell to cell propagation, by bypassing the host cell wall barrier. Transports viral genome to neighboring plant cells directly through plasmosdesmata, without any budding. This chain is P3N-PIPO polyprotein, found in Prunus armeniaca (Apricot).